A 482-amino-acid chain; its full sequence is tRNA sulfurtransferase (482 aa).

One can recognise a THUMP domain in the interval 61-165 (LAIRDALTRI…DDRLLLIKGR (105 aa)). ATP contacts are provided by residues 183–184 (LI), Lys265, Gly287, and Gln296. Cys344 and Cys456 are joined by a disulfide. Residues 404–482 (FGPNDVILDI…GFNNVKVYRP (79 aa)) form the Rhodanese domain. The active-site Cysteine persulfide intermediate is Cys456.

This sequence belongs to the ThiI family.

Its subcellular location is the cytoplasm. It carries out the reaction [ThiI sulfur-carrier protein]-S-sulfanyl-L-cysteine + a uridine in tRNA + 2 reduced [2Fe-2S]-[ferredoxin] + ATP + H(+) = [ThiI sulfur-carrier protein]-L-cysteine + a 4-thiouridine in tRNA + 2 oxidized [2Fe-2S]-[ferredoxin] + AMP + diphosphate. The catalysed reaction is [ThiS sulfur-carrier protein]-C-terminal Gly-Gly-AMP + S-sulfanyl-L-cysteinyl-[cysteine desulfurase] + AH2 = [ThiS sulfur-carrier protein]-C-terminal-Gly-aminoethanethioate + L-cysteinyl-[cysteine desulfurase] + A + AMP + 2 H(+). The protein operates within cofactor biosynthesis; thiamine diphosphate biosynthesis. Its function is as follows. Catalyzes the ATP-dependent transfer of a sulfur to tRNA to produce 4-thiouridine in position 8 of tRNAs, which functions as a near-UV photosensor. Also catalyzes the transfer of sulfur to the sulfur carrier protein ThiS, forming ThiS-thiocarboxylate. This is a step in the synthesis of thiazole, in the thiamine biosynthesis pathway. The sulfur is donated as persulfide by IscS. The protein is tRNA sulfurtransferase of Escherichia coli O8 (strain IAI1).